The following is a 161-amino-acid chain: Nucleotide-binding protein Rpic_2826 (161 aa).

It belongs to the YajQ family.

Nucleotide-binding protein. This chain is Nucleotide-binding protein Rpic_2826, found in Ralstonia pickettii (strain 12J).